Reading from the N-terminus, the 311-residue chain is GTPase Era (311 aa).

Positions 18–185 (RSGFVALIGA…AKYLAESVPN (168 aa)) constitute an Era-type G domain. The segment at 26–33 (GAPNAGKS) is G1. A GTP-binding site is contributed by 26–33 (GAPNAGKS). The G2 stretch occupies residues 52-56 (QTTRA). Positions 73 to 76 (DTPG) are G3. Residues 73-77 (DTPGI) and 135-138 (NKVD) contribute to the GTP site. The interval 135 to 138 (NKVD) is G4. Positions 164-166 (ISA) are G5. The KH type-2 domain maps to 216–293 (LHEELPYAST…HQFLFVKVRE (78 aa)).

It belongs to the TRAFAC class TrmE-Era-EngA-EngB-Septin-like GTPase superfamily. Era GTPase family. Monomer.

It is found in the cytoplasm. The protein resides in the cell inner membrane. Functionally, an essential GTPase that binds both GDP and GTP, with rapid nucleotide exchange. Plays a role in 16S rRNA processing and 30S ribosomal subunit biogenesis and possibly also in cell cycle regulation and energy metabolism. This Brucella melitensis biotype 1 (strain ATCC 23456 / CCUG 17765 / NCTC 10094 / 16M) protein is GTPase Era.